The primary structure comprises 325 residues: Dimethylallyltranstransferase (325 aa).

Arg-54 and His-84 together coordinate isopentenyl diphosphate. Residues Asp-91 and Asp-95 each coordinate Mg(2+). A DDXXD motif motif is present at residues 91 to 95 (DRVVD). Arg-101 is an isopentenyl diphosphate binding site. The DDXXD motif signature appears at 217 to 221 (RDIIA).

It belongs to the FPP/GGPP synthase family. Mg(2+) is required as a cofactor.

It catalyses the reaction isopentenyl diphosphate + dimethylallyl diphosphate = (2E)-geranyl diphosphate + diphosphate. It participates in isoprenoid biosynthesis; geranyl diphosphate biosynthesis; geranyl diphosphate from dimethylallyl diphosphate and isopentenyl diphosphate: step 1/1. In terms of biological role, catalyzes the addition of isopentenyl diphosphate (IPP) onto dimethylallyl diphosphate (DMAPP) to form geranyl pyrophosphate (GPP). Is probably involved in the biosynthesis of decaprenyl diphosphate, which is required for mycobacterial cell wall synthesis. Could be required for host endothelial-cell invasion and/or intracellular survival. In Mycobacterium tuberculosis (strain ATCC 25618 / H37Rv), this protein is Dimethylallyltranstransferase.